The primary structure comprises 347 residues: Quinolinate synthase (347 aa).

Iminosuccinate contacts are provided by His47 and Ser68. [4Fe-4S] cluster is bound at residue Cys113. Iminosuccinate is bound by residues Tyr139–Asn141 and Ser156. Residue Cys200 coordinates [4Fe-4S] cluster. Iminosuccinate is bound by residues His226–Glu228 and Thr243. Cys297 is a binding site for [4Fe-4S] cluster.

It belongs to the quinolinate synthase family. Type 1 subfamily. Requires [4Fe-4S] cluster as cofactor.

The protein resides in the cytoplasm. It carries out the reaction iminosuccinate + dihydroxyacetone phosphate = quinolinate + phosphate + 2 H2O + H(+). It functions in the pathway cofactor biosynthesis; NAD(+) biosynthesis; quinolinate from iminoaspartate: step 1/1. Catalyzes the condensation of iminoaspartate with dihydroxyacetone phosphate to form quinolinate. In Escherichia fergusonii (strain ATCC 35469 / DSM 13698 / CCUG 18766 / IAM 14443 / JCM 21226 / LMG 7866 / NBRC 102419 / NCTC 12128 / CDC 0568-73), this protein is Quinolinate synthase.